We begin with the raw amino-acid sequence, 318 residues long: N-acyl-aromatic-L-amino acid amidohydrolase (carboxylate-forming) (318 aa).

Residues 1–210 are hydrolytic domain; the sequence is MSSLPGSREP…ILDFIELFNQ (210 aa). The Zn(2+) site is built by His-21 and Glu-24. Substrate-binding positions include Arg-63 and 70–71; that span reads NR. His-116 provides a ligand contact to Zn(2+). 2 residues coordinate substrate: Glu-177 and Tyr-287. The segment at 211-318 is shielding domain; the sequence is GMDLPAFEMD…RLTPRSTQTP (108 aa). Thr-317 is modified (phosphothreonine).

The protein belongs to the AspA/AstE family. Aspartoacylase subfamily. Exists as a mixture of homodimers and homotetramer, both catalytically active. Zn(2+) is required as a cofactor. As to expression, expressed predominantly in kidney and to a lesser extent in liver. Weakly expressed in heart, small intestine, brain, lung, testis, and stomach.

The protein localises to the apical cell membrane. The protein resides in the cytoplasm. It carries out the reaction an N-acyl-aromatic L-alpha-amino acid + H2O = an aromatic L-alpha-amino acid + a carboxylate. The catalysed reaction is an N-acetyl-L-cysteine-S-conjugate + H2O = an S-substituted L-cysteine + acetate. Plays an important role in deacetylating mercapturic acids in kidney proximal tubules. Also acts on N-acetyl-aromatic amino acids. This is N-acyl-aromatic-L-amino acid amidohydrolase (carboxylate-forming) (Acy3) from Mus musculus (Mouse).